We begin with the raw amino-acid sequence, 432 residues long: Adenylosuccinate synthetase (432 aa).

GTP-binding positions include 12–18 (GDEGKGK) and 40–42 (GHT). The Proton acceptor role is filled by Asp13. Mg(2+) is bound by residues Asp13 and Gly40. Residues 13-16 (DEGK), 38-41 (NAGH), Thr128, Arg142, Gln223, Thr238, and Arg302 contribute to the IMP site. The active-site Proton donor is His41. 298-304 (TVTGRPR) is a substrate binding site. Residues Arg304, 330-332 (LLD), and 412-414 (SVG) each bind GTP.

It belongs to the adenylosuccinate synthetase family. Homodimer. Mg(2+) serves as cofactor.

Its subcellular location is the cytoplasm. It catalyses the reaction IMP + L-aspartate + GTP = N(6)-(1,2-dicarboxyethyl)-AMP + GDP + phosphate + 2 H(+). It functions in the pathway purine metabolism; AMP biosynthesis via de novo pathway; AMP from IMP: step 1/2. Functionally, plays an important role in the de novo pathway of purine nucleotide biosynthesis. Catalyzes the first committed step in the biosynthesis of AMP from IMP. The polypeptide is Adenylosuccinate synthetase (Limosilactobacillus reuteri (strain DSM 20016) (Lactobacillus reuteri)).